The chain runs to 303 residues: MGEIFSEQSLNVQTVSDGVTASTTAQANGVSVGVTNADAAVTSNQDNQGVVYGHSVVDVAASAGASSAVRTTAVGNAAALSASNGTISAFAVQTNSAGVTARGQVEAATAEAADLTVSTLAMGNSAGVTLDNGSAGARISQSTTANVLADGGAIVGYVSGTSAVTATTAGNNINVTGANQSAVRAITDQANTADVTQASKFTAYGNSYMTATAATATGNNLAVSNDGPLADVAAHQWNTSYVRGQAEGTSYLFGAAQTTAYAAGNSARSTMSGPKSCSTTFRPIRAAASRRPPASAGTRAMTR.

Residues 266-281 are compositionally biased toward polar residues; the sequence is SARSTMSGPKSCSTTF. The segment at 266–303 is disordered; the sequence is SARSTMSGPKSCSTTFRPIRAAASRRPPASAGTRAMTR. Over residues 282–303 the composition is skewed to low complexity; it reads RPIRAAASRRPPASAGTRAMTR.

Its subcellular location is the cell outer membrane. Its function is as follows. Involved in attachment of the holdfast to the cell. The holdfast is a structure that allows the bacteria to firmly adhere to surfaces. The polypeptide is Holdfast attachment protein D (hfaD) (Caulobacter vibrioides (strain ATCC 19089 / CIP 103742 / CB 15) (Caulobacter crescentus)).